Consider the following 236-residue polypeptide: Protein Thf1 (236 aa).

The stretch at 180–220 (PVEKMQKDLEQYRSNLEKMTQARKTLEDIVAAERKRRQQNA) forms a coiled coil. The tract at residues 206 to 236 (EDIVAAERKRRQQNAAPDRSPESASATEAPN) is disordered. Over residues 227-236 (ESASATEAPN) the composition is skewed to polar residues.

This sequence belongs to the THF1 family.

Its function is as follows. May be involved in photosynthetic membrane biogenesis. The chain is Protein Thf1 from Cyanothece sp. (strain PCC 7425 / ATCC 29141).